Reading from the N-terminus, the 75-residue chain is Cytochrome c oxidase subunit 6C (75 aa).

Topologically, residues 1-13 are mitochondrial matrix; sequence MAPEVLPKPRMRG. The helical transmembrane segment at 14 to 54 threads the bilayer; that stretch reads LLARRLRNHMAVAFVLSLGVAALYKFRVADQRKKAYADFYR. The Mitochondrial intermembrane portion of the chain corresponds to 55–75; it reads NYDVMKDFEEMRKAGIFQSVK.

Belongs to the cytochrome c oxidase subunit 6c family. As to quaternary structure, component of the cytochrome c oxidase (complex IV, CIV), a multisubunit enzyme composed of 14 subunits. The complex is composed of a catalytic core of 3 subunits MT-CO1, MT-CO2 and MT-CO3, encoded in the mitochondrial DNA, and 11 supernumerary subunits COX4I1 (or COX4I2), COX5A, COX5B, COX6A1 (or COX6A2), COX6B1 (or COX6B2), COX6C, COX7A2 (or COX7A1), COX7B, COX7C, COX8A and NDUFA4, which are encoded in the nuclear genome. The complex exists as a monomer or a dimer and forms supercomplexes (SCs) in the inner mitochondrial membrane with NADH-ubiquinone oxidoreductase (complex I, CI) and ubiquinol-cytochrome c oxidoreductase (cytochrome b-c1 complex, complex III, CIII), resulting in different assemblies (supercomplex SCI(1)III(2)IV(1) and megacomplex MCI(2)III(2)IV(2)).

The protein resides in the mitochondrion inner membrane. It participates in energy metabolism; oxidative phosphorylation. Its function is as follows. Component of the cytochrome c oxidase, the last enzyme in the mitochondrial electron transport chain which drives oxidative phosphorylation. The respiratory chain contains 3 multisubunit complexes succinate dehydrogenase (complex II, CII), ubiquinol-cytochrome c oxidoreductase (cytochrome b-c1 complex, complex III, CIII) and cytochrome c oxidase (complex IV, CIV), that cooperate to transfer electrons derived from NADH and succinate to molecular oxygen, creating an electrochemical gradient over the inner membrane that drives transmembrane transport and the ATP synthase. Cytochrome c oxidase is the component of the respiratory chain that catalyzes the reduction of oxygen to water. Electrons originating from reduced cytochrome c in the intermembrane space (IMS) are transferred via the dinuclear copper A center (CU(A)) of subunit 2 and heme A of subunit 1 to the active site in subunit 1, a binuclear center (BNC) formed by heme A3 and copper B (CU(B)). The BNC reduces molecular oxygen to 2 water molecules using 4 electrons from cytochrome c in the IMS and 4 protons from the mitochondrial matrix. The protein is Cytochrome c oxidase subunit 6C (COX6C) of Homo sapiens (Human).